The following is a 511-amino-acid chain: Maturase K (511 aa).

The protein belongs to the intron maturase 2 family. MatK subfamily.

The protein localises to the plastid. It is found in the chloroplast. Its function is as follows. Usually encoded in the trnK tRNA gene intron. Probably assists in splicing its own and other chloroplast group II introns. In Hordeum vulgare (Barley), this protein is Maturase K.